Consider the following 358-residue polypeptide: Bi-functional coumaroyl CoA and feruloyl CoA ortho-hydroxylase F6H2-1-1 (358 aa).

The Fe2OG dioxygenase domain maps to 207-308; that stretch reads GSRRININYY…RISVPVFVNP (102 aa). A 2-oxoglutarate-binding site is contributed by Y216. Residues H231, D233, and H289 each coordinate Fe cation. 2 residues coordinate 2-oxoglutarate: R299 and S301.

This sequence belongs to the iron/ascorbate-dependent oxidoreductase family. The cofactor is L-ascorbate. Fe(2+) is required as a cofactor. In terms of tissue distribution, mostly expressed in underground stems and stems, and, at low levels, in tubers, leaves and petioles.

The catalysed reaction is (E)-4-coumaroyl-CoA + 2-oxoglutarate + O2 = (E)-2,4-dihydroxycinnamoyl-CoA + succinate + CO2. It carries out the reaction (E)-feruloyl-CoA + 2-oxoglutarate + O2 = (E)-6-hydroxyferuloyl-CoA + succinate + CO2. Its pathway is phenylpropanoid metabolism. In terms of biological role, 2-oxoglutarate (OG)- and Fe(II)-dependent dioxygenase (2OGD) involved in scopoletin and umbelliferone biosynthesis. Converts feruloyl CoA into 6'-hydroxyferuloyl CoA, and p-coumaroyl CoA into 2,4-dihydroxycinnamoyl-CoA, but has no activity with caffeoyl-CoA. The protein is Bi-functional coumaroyl CoA and feruloyl CoA ortho-hydroxylase F6H2-1-1 of Ipomoea batatas (Sweet potato).